The primary structure comprises 476 residues: MASLTLRCDSTHLLPSRDVVKGTKPFGTSLVYPRIISKKFNVRMRVIPEEGDVFSSSKSNGSSMGIELQPDLVSFGTLAAEMIPTTMDSPEVEDEEFDLDRPTDGFASIPQAIEDIRHGKMVVVVDDEDRENEGDLIMAASLATPEAMAFVVKHGTGIVCVSMKGEDLERLELPLMVTRKDNEEKLRTAFTVSVDAKKGTSTGVSARDRAQTILTLASKDSKPEDFNRPGHIFPLRYREGGVLKRAGHTEASVDLTVLAGLEPVSVLCEIVDDDGSMARLPRLRQFAQENNLKLISIADLIRYRRKRERLVEFTAVAPIPTMWGPFKAHCFKSLLDGVEHIAMVKGEIGDGKDILVRVHAECITDDIFGNSSGGKQLAIAMRLIEENGRGVFVYLRGPESKGIDLSHKPRTYNTNSDQAEGVSFPVASREYGIGAQILRDLGVREMKVMTNNPAHYVGLKGYGLSISGKVPLITTP.

A chloroplast-targeting transit peptide spans 1-54 (MASLTLRCDSTHLLPSRDVVKGTKPFGTSLVYPRIISKKFNVRMRVIPEEGDVF). Residues 44-306 (MRVIPEEGDV…IADLIRYRRK (263 aa)) are DHBP synthase. D-ribulose 5-phosphate contacts are provided by residues 130–131 (RE), Asp135, 245–249 (RAGHT), and Glu269. Glu131 contacts Mg(2+). His248 contributes to the Mg(2+) binding site. The inactive GTP cyclohydrolase II stretch occupies residues 307–476 (RERLVEFTAV…SGKVPLITTP (170 aa)). GTP-binding positions include 357-361 (RVHAE), Gln376, 399-401 (ESK), and Thr450.

This sequence in the N-terminal section; belongs to the DHBP synthase family. The protein in the C-terminal section; belongs to the GTP cyclohydrolase II family. Mg(2+) serves as cofactor. The cofactor is Mn(2+). In terms of tissue distribution, expressed in leaves, shoots, roots, flowers and siliques.

The protein localises to the plastid. It localises to the chloroplast. It catalyses the reaction D-ribulose 5-phosphate = (2S)-2-hydroxy-3-oxobutyl phosphate + formate + H(+). The protein operates within cofactor biosynthesis; riboflavin biosynthesis; 2-hydroxy-3-oxobutyl phosphate from D-ribulose 5-phosphate: step 1/1. In terms of biological role, involved in riboflavin biosynthesis. Catalyzes the conversion of D-ribulose 5-phosphate to formate and 3,4-dihydroxy-2-butanone 4-phosphate. RIBA2 and RIBA3 together are not able to complement the loss of function of RIBA1. The protein is Monofunctional riboflavin biosynthesis protein RIBA 2, chloroplastic (RIBA2) of Arabidopsis thaliana (Mouse-ear cress).